The primary structure comprises 358 residues: MFKMVSSPHTHSGKLTAHIMLWVILAMMPAFFTQIYYFGFGVVLQSALAIGTAIIAEFIAIKLRGKKPLNYLSDFSVALTALILAMAIPPYAPYWIIIIGTLCAVLLGKQVYGGLGQNPFNPAMIGYVILLISFPLQMTTWMPPINLLQEPPTFSDTFSLIFSGLTTDGFTLSQLTHNIDGITQATPLDSAKIFYKSHNQLSDFYELIKLPIFMGNGTDFAQGWWQINVAFLAGGIFLILKRIIHWQIPVAMLVTFFCLATATAFTGFTHLSAISQLVSGAMMFGAFFIATDPVTASITPRGKIIFGALVGLFVYLIRYHGNYPDGVAFAILLSNICVPLIDHYTRPRVSGYPTKGRK.

4 helical membrane-spanning segments follow: residues 19–39 (IMLW…YYFG), 41–61 (GVVL…FIAI), 79–99 (LTAL…IIII), and 125–145 (IGYV…MPPI). Residue Thr-186 is modified to FMN phosphoryl threonine. Helical transmembrane passes span 220–240 (FAQG…FLIL), 248–268 (IPVA…FTGF), 271–291 (LSAI…FIAT), 297–317 (SITP…VYLI), and 321–341 (GNYP…VPLI).

The protein belongs to the NqrB/RnfD family. As to quaternary structure, the complex is composed of six subunits: RnfA, RnfB, RnfC, RnfD, RnfE and RnfG. FMN is required as a cofactor.

Its subcellular location is the cell inner membrane. Part of a membrane-bound complex that couples electron transfer with translocation of ions across the membrane. In Haemophilus influenzae (strain 86-028NP), this protein is Ion-translocating oxidoreductase complex subunit D.